A 668-amino-acid chain; its full sequence is Fe(2+) transporter FeoB (668 aa).

The FeoB-type G domain maps to 3 to 165 (SYEIALIGNP…KKAISIAVKD (163 aa)). 10–17 (GNPNVGKS) is a GTP binding site. Positions 21, 22, 24, and 25 each coordinate Mg(2+). GTP is bound by residues 35–39 (GVTVE), 56–59 (DLPG), 116–119 (NKMD), and 145–147 (SAA). 8 helical membrane passes run 344 to 364 (VGAV…ISFL), 386 to 406 (LPGK…PAIM), 418 to 438 (ILTI…IYAL), 450 to 470 (VVIL…AFLF), 515 to 535 (IIVF…SGYL), 574 to 594 (ALVF…MLYG), 613 to 633 (AYAF…LAVI), and 643 to 663 (LFAV…ISVI).

Belongs to the TRAFAC class TrmE-Era-EngA-EngB-Septin-like GTPase superfamily. FeoB GTPase (TC 9.A.8) family. In terms of assembly, the crystallized N-terminal domain is a homodimer.

The protein resides in the cell membrane. In terms of biological role, probable transporter of a GTP-driven Fe(2+) uptake system, might be able to transport Fe(2+) into or out of the cell. This Methanocaldococcus jannaschii (strain ATCC 43067 / DSM 2661 / JAL-1 / JCM 10045 / NBRC 100440) (Methanococcus jannaschii) protein is Fe(2+) transporter FeoB.